Consider the following 76-residue polypeptide: MFTMKKSLLVLFFLGTISLSLCQEERNADEEDGGEATEEEVKRSFLTTFKDLAIKAAKSAGQSVLSTLSCKLSNTC.

A signal peptide spans M1–C22. A propeptide spans Q23–V41 (removed in mature form). C70 and C76 are disulfide-bonded.

In terms of tissue distribution, expressed by the skin glands.

The protein resides in the secreted. Has antimicrobial activity against Gram-negative bacterium E.coli ATCC 8739 (MIC=12.5 ug), against Gram positive bacteria S.aureus ATCC 6538 (MIC=6.3 ug) and B.subtilis ATCC 6633 (MIC=25 ug). Has no activity against methicillin-resistant S.aureus ATCC 43300 (MIC= ug) and fungus C.albicans ATCC 90028. This Odorrana ishikawae (Ishikawa's frog) protein is Brevinin-2ISb.